A 262-amino-acid polypeptide reads, in one-letter code: Taurine import ATP-binding protein TauB (262 aa).

Residues 4–233 (LELERISAQY…RYAAGESARA (230 aa)) enclose the ABC transporter domain. Residue 38–45 (GPSGSGKT) participates in ATP binding.

This sequence belongs to the ABC transporter superfamily. Taurine importer (TC 3.A.1.17.1) family. In terms of assembly, the complex is composed of two ATP-binding proteins (TauB), two transmembrane proteins (TauC) and a solute-binding protein (TauA).

It is found in the cell inner membrane. The enzyme catalyses taurine(out) + ATP + H2O = taurine(in) + ADP + phosphate + H(+). In terms of biological role, part of the ABC transporter complex TauABC involved in taurine import. Responsible for energy coupling to the transport system. The protein is Taurine import ATP-binding protein TauB of Pseudomonas putida (Arthrobacter siderocapsulatus).